Consider the following 274-residue polypeptide: Protein STAY-GREEN, chloroplastic (274 aa).

Residues 1–48 (MAAATSTMSLLPPITQQQRWHAADSLVVLASRCHNSRRRRRCRYVVPR) constitute a chloroplast transit peptide.

This sequence belongs to the staygreen family. In terms of assembly, interacts with LHCII complex. As to expression, expressed in leaves, roots and developing seeds.

Its subcellular location is the plastid. It localises to the chloroplast membrane. It is found in the chloroplast stroma. Functionally, involved in the disassembling mechanism of the intact light-harvesting complex of photosystem II (LHCII) in the thylakoid membranes. Required to trigger chlorophyll degradation during natural and dark-induced leaf senescence. The sequence is that of Protein STAY-GREEN, chloroplastic (SGR) from Oryza sativa subsp. japonica (Rice).